The chain runs to 228 residues: PKHD-type hydroxylase Rmet_3078 (228 aa).

In terms of domain architecture, Fe2OG dioxygenase spans 80–180 (IVYPPMFNRY…RVGCFFWIQS (101 aa)). Residues His98, Asp100, and His161 each coordinate Fe cation. 2-oxoglutarate is bound at residue Arg171.

Fe(2+) serves as cofactor. The cofactor is L-ascorbate.

The protein is PKHD-type hydroxylase Rmet_3078 of Cupriavidus metallidurans (strain ATCC 43123 / DSM 2839 / NBRC 102507 / CH34) (Ralstonia metallidurans).